Consider the following 327-residue polypeptide: MEKQLAELSVYILIIFLILGFIMAILMRFGDDTTLFDLTQLPKNNPKKLNYYVQPAKNPNENVPFKTIFDKPQVYVSFIVPAYNEEKRLPKMLEETIEYLEQRRYKDNNFTWEIVVVNDGSKDRTAHVVLEYAERYSNIFLLNQPHNMGKGAAIQAGCLHARGQLVLMVDADGATKISDFGLLENEIKKLMKNNKEAIVVGSRTLNEDKSKVHRTFIRKILGLGMHILIVISGVHGIKDTQCGFKLFTRDACKMLFMNQHVQRWCFDPELLVIARRRKMKVSEISVEWNEIEGSKMKISGMIKMAIDLLRIAVFYRLNIWTIRDRKF.

Residues 1-6 are Lumenal-facing; that stretch reads MEKQLA. Residues 7-27 form a helical membrane-spanning segment; the sequence is ELSVYILIIFLILGFIMAILM. Over 28 to 327 the chain is Cytoplasmic; the sequence is RFGDDTTLFD…NIWTIRDRKF (300 aa).

The protein belongs to the glycosyltransferase 2 family.

The protein resides in the endoplasmic reticulum membrane. It carries out the reaction a di-trans,poly-cis-dolichyl phosphate + UDP-alpha-D-glucose = a di-trans,poly-cis-dolichyl beta-D-glucosyl phosphate + UDP. It functions in the pathway protein modification; protein glycosylation. Functionally, dolichyl-phosphate beta-glucosyltransferase involved in the glycosylation of glycoproteins through the synthesis of dolichyl beta-D-glucosyl phosphate which serves as a sugar donor for transfer of three glucose residues to the Man-9-GlcNAc-2-PP-dolichol precursor to N-glycans. The sequence is that of Dolichyl-phosphate beta-glucosyltransferase ALG5D from Trichomonas vaginalis (strain ATCC PRA-98 / G3).